We begin with the raw amino-acid sequence, 389 residues long: MKNDINYFTSESVSEGHPDKLCDQISDAVLDACLRDDPESHVACETFASTALVLVGGEITTNTYVDIQEIARSIAEEIGYTNTDFGLDCHSMAVMNMIHSQSPDISQGVDGTGLDEYKGQQGAGDQGMMFGFACKETPELMPAPIMFSHSVLRYAAKLRKEKVIPWLRPDSKTQITVKYEGFKPIKIDTVVLSHQHYPDVQYDELKDTLINRVIKPVLGPTGLLADDTKYFINPTGRFVIGGPFGDTGLTGRKIIVDTYGGMGRHGGGAFSGKDPSKVDRSAAYMARYIAKNVVAADLARRCEVQLAYAIGVPFPVAVRVDTFGTGEVPEEKIEKAIKEVFDMSPAGIIKTLDLKRPIYKETAAYGHFGRPEFSWEKTDKTEALKKAIK.

His-17 contacts ATP. Residue Asp-19 coordinates Mg(2+). Glu-45 lines the K(+) pocket. Residues Glu-58 and Gln-101 each coordinate L-methionine. The interval Gln-101–Gly-111 is flexible loop. Residues Asp-170 to Lys-172, Arg-237 to Phe-238, Asp-246, Arg-252 to Lys-253, Ala-269, and Lys-273 contribute to the ATP site. An L-methionine-binding site is contributed by Asp-246. Residue Lys-277 participates in L-methionine binding.

Belongs to the AdoMet synthase family. Homotetramer; dimer of dimers. Mg(2+) is required as a cofactor. The cofactor is K(+).

The protein resides in the cytoplasm. It carries out the reaction L-methionine + ATP + H2O = S-adenosyl-L-methionine + phosphate + diphosphate. It functions in the pathway amino-acid biosynthesis; S-adenosyl-L-methionine biosynthesis; S-adenosyl-L-methionine from L-methionine: step 1/1. Functionally, catalyzes the formation of S-adenosylmethionine (AdoMet) from methionine and ATP. The overall synthetic reaction is composed of two sequential steps, AdoMet formation and the subsequent tripolyphosphate hydrolysis which occurs prior to release of AdoMet from the enzyme. This chain is S-adenosylmethionine synthase, found in Treponema denticola (strain ATCC 35405 / DSM 14222 / CIP 103919 / JCM 8153 / KCTC 15104).